We begin with the raw amino-acid sequence, 386 residues long: Cell division protein FtsZ (386 aa).

Residues 18–22 (GGGVN), 105–107 (GTG), Glu136, Arg140, and Asp184 each bind GTP.

Belongs to the FtsZ family. In terms of assembly, homodimer. Polymerizes to form a dynamic ring structure in a strictly GTP-dependent manner. Interacts directly with several other division proteins.

It localises to the cytoplasm. In terms of biological role, essential cell division protein that forms a contractile ring structure (Z ring) at the future cell division site. The regulation of the ring assembly controls the timing and the location of cell division. One of the functions of the FtsZ ring is to recruit other cell division proteins to the septum to produce a new cell wall between the dividing cells. Binds GTP and shows GTPase activity. The chain is Cell division protein FtsZ from Mycobacterium kansasii.